We begin with the raw amino-acid sequence, 840 residues long: GYAFKPPPRPDFGTSGRTIKLQANFFEMDIPKIDIYHYELDIKPEKCPRRVNREIVEHMVQHFKAQIFGDRKPVFDGRKNLYTAMPLPIGREKVELEVTLPGEGKDRIFKVSIKWVSCVSLQALHDALSGRLPSVPFETIQALDVVMRHLPSMRYTPVGRSFFTASEGCSNPLGGGREVWFGFHQSVRPSLWKMMLNIDVSATAFYKAQPVIEFVCEVLDFKSIEEQQKPLTDSQRVKFTKEIKGLKVEITHCGQMKRKYRVCNVTRRPASHQTFPLQQESGQTVECTVAQYFKDRHKLVLRYPHLPCLQVGQEQKHTYLPLEVCNIVAGQRCIKKLTDNQTSTMIRATARSAPDRQEEISKLMRSASFNTDPYVREFGIMVKDEMTDVTGRVLQPPSILYGGRNKAIATPVQGVWDMRNKQFHTGIEIKVWAIACFAPQRQCTEVHLKSFTEQLRKISRDAGMPIQGQPCFCKYAQGADSVGPMFRHLKNTYAGLQLVVVILPGKTPVYAEVKRVGDTVLGMATQCVQMKNVQRTTPQTLSNLCLKINVKLGGVNNILLPQGRPPVFQQPVIFLGADVTHPPAGDGKKPSIAAVVGSMDAHPNRYCATVRVQQHRQEIIQDLAAMVRELLIQFYKSTRFKPTRIIFYRDGVSEGQFQQVLHHELLAIREACIKLEKDYQPGITFIVVQKRHHTRLFCTDKNERVGKSGNIPAGTTVDTKITHPTEFDFYLCSHAGIQGTSRPSHYHVLWDDNRFSSDELQILTYQLCHTYVRCTRSVSIPAPAYYAHLVAFRARYHLVDKEHDSAEGSHTSGQSNGRDHQALAKAVQVHQDTLRTMYFA.

Residues 210–329 (PVIEFVCEVL…LPLEVCNIVA (120 aa)) form the PAZ domain. The residue at position 368 (Ser368) is a Phosphoserine. The region spanning 498–799 (LVVVILPGKT…VAFRARYHLV (302 aa)) is the Piwi domain. A divalent metal cation contacts are provided by Asp578 and Asp650. The residue at position 681 (Pro681) is a 4-hydroxyproline. His788 lines the a divalent metal cation pocket. A phosphoserine mark is found at Ser805, Ser809, Ser812, and Ser815.

The protein belongs to the argonaute family. Ago subfamily. Interacts with DICER1 through its Piwi domain and with TARBP2 during assembly of the RNA-induced silencing complex (RISC). Together, DICER1, AGO2 and TARBP2 constitute the trimeric RISC loading complex (RLC), or micro-RNA (miRNA) loading complex (miRLC). Within the RLC/miRLC, DICER1 and TARBP2 are required to process precursor miRNAs (pre-miRNAs) to mature miRNAs and then load them onto AGO2. AGO2 bound to the mature miRNA constitutes the minimal RISC and may subsequently dissociate from DICER1 and TARBP2. Note however that the term RISC has also been used to describe the trimeric RLC/miRLC. The formation of RISC complexes containing siRNAs rather than miRNAs appears to occur independently of DICER1. Interacts with AGO1. Also interacts with DDB1, DDX5, DDX6, DDX20, DHX30, DHX36, DDX47, DHX9, ELAVL, FXR1, GEMIN4, HNRNPF, IGF2BP1, ILF3, IMP8, MATR3, PABPC1, PRMT5, P4HA1, P4HB, RBM4, SART3, TNRC6A, TNRC6B, UPF1 and YBX1. Interacts with the P-body components DCP1A and XRN1. Associates with polysomes and messenger ribonucleoproteins (mNRPs). Interacts with RBM4; the interaction is modulated under stress-induced conditions, occurs under both cell proliferation and differentiation conditions and in an RNA- and phosphorylation-independent manner. Interacts with LIMD1, WTIP and AJUBA. Interacts with TRIM71; the interaction increases in presence of RNA. Interacts with APOBEC3G in an RNA-dependent manner. Interacts with APOBEC3A, APOBEC3C, APOBEC3F and APOBEC3H. Interacts with DICER1, TARBP2, EIF6, MOV10 and RPL7A (60S ribosome subunit); they form a large RNA-induced silencing complex (RISC). Interacts with FMR1. Interacts with ZFP36. Interacts with RC3H1; the interaction is RNA independent. Found in a complex composed of AGO2, CHD7 and ARB2A. Interacts with SND1 and SYT11. Interacts with CLNK. Interacts with GARRE1. Hydroxylated. 4-hydroxylation appears to enhance protein stability but is not required for miRNA-binding or endonuclease activity. In terms of processing, ubiquitinated on surface-exposed lysines by a SCF-like E3 ubiquitin-protein ligase complex containing ZSWIM8 during target-directed microRNA degradation (TDMD), a process that mediates degradation of microRNAs (miRNAs). Ubiquitination by the SCF-like E3 ubiquitin-protein ligase complex containing ZSWIM8 leads to its subsequent degradation, thereby exposing miRNAs for degradation. ZSWIM8 recognizes and binds AGO2 when it is engaged with a TDMD target. Post-translationally, phosphorylation at Ser-368 by AKT3; leads to up-regulate translational repression of microRNA target and down-regulate endonucleolytic cleavage. A phosphorylation cycle of C-terminal serine cluster (Ser-805-Ser-815) regulates the release of target mRNAs. Target-binding leads to phosphorylation of these residues by CSNK1A1, which reduces the affinity of AGO2 for mRNA and enables target release. The ANKRD52-PPP6C phosphatase complex dephosphorylates the residues, which primes AGO2 for binding a new target.

The protein localises to the cytoplasm. It is found in the P-body. It localises to the nucleus. The enzyme catalyses Endonucleolytic cleavage to 5'-phosphomonoester.. Functionally, required for RNA-mediated gene silencing (RNAi) by the RNA-induced silencing complex (RISC). The 'minimal RISC' appears to include AGO2 bound to a short guide RNA such as a microRNA (miRNA) or short interfering RNA (siRNA). These guide RNAs direct RISC to complementary mRNAs that are targets for RISC-mediated gene silencing. The precise mechanism of gene silencing depends on the degree of complementarity between the miRNA or siRNA and its target. Binding of RISC to a perfectly complementary mRNA generally results in silencing due to endonucleolytic cleavage of the mRNA specifically by AGO2. Binding of RISC to a partially complementary mRNA results in silencing through inhibition of translation, and this is independent of endonuclease activity. May inhibit translation initiation by binding to the 7-methylguanosine cap, thereby preventing the recruitment of the translation initiation factor eIF4-E. May also inhibit translation initiation via interaction with EIF6, which itself binds to the 60S ribosomal subunit and prevents its association with the 40S ribosomal subunit. The inhibition of translational initiation leads to the accumulation of the affected mRNA in cytoplasmic processing bodies (P-bodies), where mRNA degradation may subsequently occur. In some cases RISC-mediated translational repression is also observed for miRNAs that perfectly match the 3' untranslated region (3'-UTR). Can also up-regulate the translation of specific mRNAs under certain growth conditions. Binds to the AU element of the 3'-UTR of the TNF (TNF-alpha) mRNA and up-regulates translation under conditions of serum starvation. Also required for transcriptional gene silencing (TGS), in which short RNAs known as antigene RNAs or agRNAs direct the transcriptional repression of complementary promoter regions. The sequence is that of Protein argonaute-2 (AGO2) from Oryctolagus cuniculus (Rabbit).